The chain runs to 427 residues: Flotillin-1 (427 aa).

3 positions are modified to phosphoserine: Ser19, Ser163, and Ser385. Thr387 carries the post-translational modification Phosphothreonine.

Belongs to the band 7/mec-2 family. Flotillin subfamily. Heterooligomeric complex of flotillin-1 and flotillin-2 and caveolin-1 and caveolin-2. Interacts with ECPAS.

It localises to the cell membrane. The protein resides in the endosome. It is found in the membrane. The protein localises to the caveola. Its subcellular location is the melanosome. It localises to the membrane raft. Functionally, may act as a scaffolding protein within caveolar membranes, functionally participating in formation of caveolae or caveolae-like vesicles. This chain is Flotillin-1 (FLOT1), found in Pongo abelii (Sumatran orangutan).